Reading from the N-terminus, the 399-residue chain is F-box protein At1g30790 (399 aa).

Positions 3 to 49 (RQEIDHIPFDLTVEILTRLPAKSLMKFKCVSKLWSSIIHNQSFIDSF) constitute an F-box domain.

This chain is F-box protein At1g30790, found in Arabidopsis thaliana (Mouse-ear cress).